An 800-amino-acid polypeptide reads, in one-letter code: Putative antiporter subunit mnhA2 (800 aa).

The next 20 membrane-spanning stretches (helical) occupy residues Met-1–Ser-21, Ile-33–Ala-53, Gly-78–Ala-98, Leu-118–Phe-138, Phe-167–Met-187, Gly-207–Phe-227, Thr-241–Leu-261, Tyr-273–Leu-293, Gly-300–Gly-320, Ile-331–Ile-351, Leu-387–Ser-407, Phe-424–Phe-444, Pro-472–Val-492, Gly-527–Ile-547, Ile-595–Leu-615, Gly-627–Ile-647, Leu-651–Met-671, Leu-676–Ser-696, Ile-712–Thr-732, and Leu-768–Leu-788.

It belongs to the CPA3 antiporters (TC 2.A.63) subunit A family. In terms of assembly, may form a heterooligomeric complex that consists of seven subunits: mnhA2, mnhB2, mnhC2, mnhD2, mnhE2, mnhF2 and mnhG2.

It localises to the cell membrane. This is Putative antiporter subunit mnhA2 (mnhA2) from Staphylococcus aureus (strain MSSA476).